The chain runs to 54 residues: Light-harvesting protein B-880 beta chain (54 aa).

Residues 1 to 20 (AEDRSSLSGVSDAEAKEFHA) lie on the Cytoplasmic side of the membrane. H19 and H37 together coordinate a bacteriochlorophyll. Residues 21–43 (LFVSSFTAFIVIAVLAHVLAWAW) form a helical membrane-spanning segment. The Periplasmic segment spans residues 44-54 (RPWIPGPKGWA).

The protein belongs to the antenna complex beta subunit family. In terms of assembly, the core complex is formed by different alpha and beta chains, binding bacteriochlorophyll molecules, and arranged most probably in tetrameric structures disposed around the reaction center. The non-pigmented gamma chains may constitute additional components.

It is found in the cell inner membrane. Antenna complexes are light-harvesting systems, which transfer the excitation energy to the reaction centers. This is Light-harvesting protein B-880 beta chain from Rhodoblastus acidophilus (Rhodopseudomonas acidophila).